The following is a 98-amino-acid chain: Lipolysis-activating peptide 1-alpha chain (98 aa).

The first 22 residues, 1 to 22 (MMKFVLFGMIVILFSLMGSIRG), serve as a signal peptide directing secretion. The 64-residue stretch at 26 to 89 (PGNYPTNAYG…IWNAVKNHCT (64 aa)) folds into the LCN-type CS-alpha/beta domain. Intrachain disulfides connect C40–C63, C49–C68, and C53–C70. Asparagine amide is present on N96.

Belongs to the long (3 C-C) scorpion toxin superfamily. As to quaternary structure, monomer (edited version) and heterodimer (non-edited version) of this alpha chain and a beta chain (AC Q95P90). In terms of tissue distribution, expressed by the venom gland.

The protein resides in the secreted. The heterodimer non-edited LVP1 induces lipolysis in rat adipocytes. Induction of lipolysis by LVP1 appears to be mediated through the beta-2 adrenergic receptor pathway (ADRB2). Its function is as follows. The edited BmKBTx, similar to beta-toxins, may modulate voltage-gated sodium channels (Nav) and may block voltage-gated potassium channels (Kv). Seems to be a rare component in the venom. This chain is Lipolysis-activating peptide 1-alpha chain (LVP1a), found in Olivierus martensii (Manchurian scorpion).